The chain runs to 363 residues: Phosphoserine aminotransferase (363 aa).

An L-glutamate-binding site is contributed by arginine 42. Pyridoxal 5'-phosphate is bound by residues 76–77 (GR), tryptophan 102, threonine 156, aspartate 175, and glutamine 198. Residue lysine 199 is modified to N6-(pyridoxal phosphate)lysine. 240 to 241 (NT) contributes to the pyridoxal 5'-phosphate binding site.

The protein belongs to the class-V pyridoxal-phosphate-dependent aminotransferase family. SerC subfamily. In terms of assembly, homodimer. It depends on pyridoxal 5'-phosphate as a cofactor.

The protein localises to the cytoplasm. The enzyme catalyses O-phospho-L-serine + 2-oxoglutarate = 3-phosphooxypyruvate + L-glutamate. It catalyses the reaction 4-(phosphooxy)-L-threonine + 2-oxoglutarate = (R)-3-hydroxy-2-oxo-4-phosphooxybutanoate + L-glutamate. It functions in the pathway amino-acid biosynthesis; L-serine biosynthesis; L-serine from 3-phospho-D-glycerate: step 2/3. It participates in cofactor biosynthesis; pyridoxine 5'-phosphate biosynthesis; pyridoxine 5'-phosphate from D-erythrose 4-phosphate: step 3/5. In terms of biological role, catalyzes the reversible conversion of 3-phosphohydroxypyruvate to phosphoserine and of 3-hydroxy-2-oxo-4-phosphonooxybutanoate to phosphohydroxythreonine. The polypeptide is Phosphoserine aminotransferase (Shewanella sp. (strain W3-18-1)).